The following is an 85-amino-acid chain: Small integral membrane protein 35 (85 aa).

The helical transmembrane segment at 7–27 (ISTLGMILGVGLSLLLVSILG) threads the bilayer.

It localises to the membrane. The sequence is that of Small integral membrane protein 35 from Mus musculus (Mouse).